The chain runs to 287 residues: Eukaryotic translation initiation factor 3 subunit F (287 aa).

Positions 12–142 (VRVHPVVLFQ…IKAYVCVSLG (131 aa)) constitute an MPN domain.

Belongs to the eIF-3 subunit F family. Component of the eukaryotic translation initiation factor 3 (eIF-3) complex.

It localises to the cytoplasm. Its function is as follows. Component of the eukaryotic translation initiation factor 3 (eIF-3) complex, which is involved in protein synthesis of a specialized repertoire of mRNAs and, together with other initiation factors, stimulates binding of mRNA and methionyl-tRNAi to the 40S ribosome. The eIF-3 complex specifically targets and initiates translation of a subset of mRNAs involved in cell proliferation. The sequence is that of Eukaryotic translation initiation factor 3 subunit F from Anopheles gambiae (African malaria mosquito).